Consider the following 64-residue polypeptide: Protein DsrB (64 aa).

Belongs to the DsrB family.

The protein is Protein DsrB of Salmonella arizonae (strain ATCC BAA-731 / CDC346-86 / RSK2980).